The primary structure comprises 684 residues: DNA ligase (684 aa).

NAD(+)-binding positions include 46–50, 100–101, and Glu-130; these read DYVYD and SL. Lys-132 serves as the catalytic N6-AMP-lysine intermediate. Residues Arg-153, Glu-187, Lys-303, and Lys-327 each coordinate NAD(+). Residues Cys-421, Cys-424, Cys-439, and Cys-444 each coordinate Zn(2+). Residues 604 to 684 form the BRCT domain; sequence DEKNYFFNKR…DFINLSNAKK (81 aa).

The protein belongs to the NAD-dependent DNA ligase family. LigA subfamily. Mg(2+) serves as cofactor. It depends on Mn(2+) as a cofactor.

It carries out the reaction NAD(+) + (deoxyribonucleotide)n-3'-hydroxyl + 5'-phospho-(deoxyribonucleotide)m = (deoxyribonucleotide)n+m + AMP + beta-nicotinamide D-nucleotide.. Its function is as follows. DNA ligase that catalyzes the formation of phosphodiester linkages between 5'-phosphoryl and 3'-hydroxyl groups in double-stranded DNA using NAD as a coenzyme and as the energy source for the reaction. It is essential for DNA replication and repair of damaged DNA. This Oenococcus oeni (strain ATCC BAA-331 / PSU-1) protein is DNA ligase.